Reading from the N-terminus, the 459-residue chain is ATP synthase subunit beta (459 aa).

149–156 (GGAGVGKT) provides a ligand contact to ATP.

The protein belongs to the ATPase alpha/beta chains family. F-type ATPases have 2 components, CF(1) - the catalytic core - and CF(0) - the membrane proton channel. CF(1) has five subunits: alpha(3), beta(3), gamma(1), delta(1), epsilon(1). CF(0) has three main subunits: a(1), b(2) and c(9-12). The alpha and beta chains form an alternating ring which encloses part of the gamma chain. CF(1) is attached to CF(0) by a central stalk formed by the gamma and epsilon chains, while a peripheral stalk is formed by the delta and b chains.

The protein resides in the cell inner membrane. The enzyme catalyses ATP + H2O + 4 H(+)(in) = ADP + phosphate + 5 H(+)(out). In terms of biological role, produces ATP from ADP in the presence of a proton gradient across the membrane. The catalytic sites are hosted primarily by the beta subunits. The polypeptide is ATP synthase subunit beta (Pseudomonas savastanoi pv. phaseolicola (strain 1448A / Race 6) (Pseudomonas syringae pv. phaseolicola (strain 1448A / Race 6))).